Consider the following 668-residue polypeptide: Envelope glycoprotein (668 aa).

An N-terminal signal peptide occupies residues 1–34 (MEGPTHPKPSKDKTFSWDLIILVGVLLRLDAGMA). Topologically, residues 35-605 (NPSPHQVYNI…FNKSPWFTTL (571 aa)) are extracellular. Residues Asn43 and Asn58 are each glycosylated (N-linked (GlcNAc...) asparagine; by host). Disulfide bonds link Cys115-Cys132 and Cys124-Cys137. Residues 243–264 (PQAMGPNPVLPDQKPPSRQSQI) form a disordered region. 3 N-linked (GlcNAc...) asparagine; by host glycosylation sites follow: Asn286, Asn322, and Asn327. Disulfide bonds link Cys332-Cys335, Cys332-Cys558, and Cys550-Cys557. The CXXC signature appears at 332–335 (CWLC). Asn351, Asn354, Asn394, Asn410, and Asn430 each carry an N-linked (GlcNAc...) asparagine; by host glycan. Residues 467 to 487 (PISLTVALMLGGITVGGMARN) are fusion peptide. Coiled-coil stretches lie at residues 495–544 (LETA…ILFL) and 554–590 (KEEC…SQQD). The segment at 533 to 549 (LQNRRGLDILFLQEGGL) is immunosuppression. The short motif at 550–558 (CTALKEECC) is the CX6CC element. The chain crosses the membrane as a helical span at residues 606 to 626 (ISSIMGPLMILLLILLFGPCI). Residue Cys625 is the site of S-palmitoyl cysteine; by host attachment. Topologically, residues 627–668 (LNRLVQFVKDRISVVQTLVLTQQYQRLGQWRLRPTVSPQLNV) are cytoplasmic. The short motif at 650–653 (YQRL) is the YXXL motif; contains endocytosis signal element.

In terms of assembly, the mature envelope protein (Env) consists of a trimer of SU-TM heterodimers attached by a labile interchain disulfide bond. Specific enzymatic cleavages in vivo yield mature proteins. Envelope glycoproteins are synthesized as an inactive precursor that is N-glycosylated and processed likely by host cell furin or by a furin-like protease in the Golgi to yield the mature SU and TM proteins. The cleavage site between SU and TM requires the minimal sequence [KR]-X-[KR]-R. The R-peptide is released from the C-terminus of the cytoplasmic tail of the TM protein upon particle formation as a result of proteolytic cleavage by the viral protease. Cleavage of this peptide is required for TM to become fusogenic. In terms of processing, the CXXC motif is highly conserved across a broad range of retroviral envelope proteins. It is thought to participate in the formation of a labile disulfide bond possibly with the CX6CC motif present in the transmembrane protein. Isomerization of the intersubunit disulfide bond to an SU intrachain disulfide bond is thought to occur upon receptor recognition in order to allow membrane fusion. Post-translationally, the transmembrane protein is palmitoylated. The R-peptide is palmitoylated.

It is found in the virion membrane. Its subcellular location is the host cell membrane. Functionally, the surface protein (SU) attaches the virus to the host cell by binding to its receptor. This interaction triggers the refolding of the transmembrane protein (TM) and is thought to activate its fusogenic potential by unmasking its fusion peptide. Fusion occurs at the host cell plasma membrane. In terms of biological role, the transmembrane protein (TM) acts as a class I viral fusion protein. Under the current model, the protein has at least 3 conformational states: pre-fusion native state, pre-hairpin intermediate state, and post-fusion hairpin state. During viral and target cell membrane fusion, the coiled coil regions (heptad repeats) assume a trimer-of-hairpins structure, positioning the fusion peptide in close proximity to the C-terminal region of the ectodomain. The formation of this structure appears to drive apposition and subsequent fusion of viral and target cell membranes. Membranes fusion leads to delivery of the nucleocapsid into the cytoplasm. This Felidae (cat family) protein is Envelope glycoprotein (env).